Here is a 274-residue protein sequence, read N- to C-terminus: MPELPEVETVKRTLTELVIGKTIAGITVKWANIIKEPADVLEFETLLMNQTIRSIRRRGKFLLFEFDDIVMVSHLRMEGRYGLYEKEEPLPPHTHVIFHFTDGEELRYQDVRKFGTMHLFPKGSEEKVLPLAHLGVEPFSEQFTSELLMNAFQKTNRKIKVALLDQKTVVGLGNIYVDEALFRARIHPERLAHSLSKEEMAVLHKAIVSTLEEAVEMGGSSIKSYVNGQGEMGMFQQKLGVYGRKNEPCRQCGTDILKTVVGGRGTHFCPNCQL.

P2 acts as the Schiff-base intermediate with DNA in catalysis. The active-site Proton donor is the E3. K60 acts as the Proton donor; for beta-elimination activity in catalysis. Positions 93 and 112 each coordinate DNA. The FPG-type zinc finger occupies 240–274; the sequence is GVYGRKNEPCRQCGTDILKTVVGGRGTHFCPNCQL. R264 (proton donor; for delta-elimination activity) is an active-site residue.

Belongs to the FPG family. In terms of assembly, monomer. It depends on Zn(2+) as a cofactor.

The enzyme catalyses Hydrolysis of DNA containing ring-opened 7-methylguanine residues, releasing 2,6-diamino-4-hydroxy-5-(N-methyl)formamidopyrimidine.. It carries out the reaction 2'-deoxyribonucleotide-(2'-deoxyribose 5'-phosphate)-2'-deoxyribonucleotide-DNA = a 3'-end 2'-deoxyribonucleotide-(2,3-dehydro-2,3-deoxyribose 5'-phosphate)-DNA + a 5'-end 5'-phospho-2'-deoxyribonucleoside-DNA + H(+). In terms of biological role, involved in base excision repair of DNA damaged by oxidation or by mutagenic agents. Acts as a DNA glycosylase that recognizes and removes damaged bases. Has a preference for oxidized purines, such as 7,8-dihydro-8-oxoguanine (8-oxoG). Has AP (apurinic/apyrimidinic) lyase activity and introduces nicks in the DNA strand. Cleaves the DNA backbone by beta-delta elimination to generate a single-strand break at the site of the removed base with both 3'- and 5'-phosphates. This Cytobacillus firmus (Bacillus firmus) protein is Formamidopyrimidine-DNA glycosylase (mutM).